A 342-amino-acid polypeptide reads, in one-letter code: Delta(6)-protoilludene synthase 8 (342 aa).

Asp81 contributes to the Mg(2+) binding site. Residues 93–97 (RDMVD) carry the DDXXD motif motif. 3 residues coordinate Mg(2+): Asn217, Ser221, and Glu225. The NSE/DTE motif signature appears at 217–225 (NDLVSYNRE). (2E,6E)-farnesyl diphosphate-binding residues include Arg305 and Tyr306.

Belongs to the terpene synthase family. Mg(2+) is required as a cofactor.

It carries out the reaction (2E,6E)-farnesyl diphosphate = Delta(6)-protoilludene + diphosphate. Functionally, terpene cyclase that catalyzes the cyclization of farnesyl diphosphate (FPP) to delta(6)-protoilludene. This is Delta(6)-protoilludene synthase 8 from Postia placenta (strain ATCC 44394 / Madison 698-R) (Brown rot fungus).